We begin with the raw amino-acid sequence, 522 residues long: Maturase K (522 aa).

This sequence belongs to the intron maturase 2 family. MatK subfamily.

The protein resides in the plastid. The protein localises to the chloroplast. Usually encoded in the trnK tRNA gene intron. Probably assists in splicing its own and other chloroplast group II introns. The protein is Maturase K of Schizorhiza neglecta (Lapeirousia neglecta).